A 107-amino-acid polypeptide reads, in one-letter code: UPF0473 protein Ldb1604 (107 aa).

It belongs to the UPF0473 family.

This chain is UPF0473 protein Ldb1604, found in Lactobacillus delbrueckii subsp. bulgaricus (strain ATCC 11842 / DSM 20081 / BCRC 10696 / JCM 1002 / NBRC 13953 / NCIMB 11778 / NCTC 12712 / WDCM 00102 / Lb 14).